The chain runs to 942 residues: Chitin synthase 4 (942 aa).

Residues 1–124 (MPPRYPFGGG…FDEHDGDVPL (124 aa)) form a disordered region. Over residues 14–26 (DEAHHQPLERRTT) the composition is skewed to basic and acidic residues. Polar residues predominate over residues 27–36 (AEAQGNSFTH). Residue N604 is glycosylated (N-linked (GlcNAc...) asparagine). Helical transmembrane passes span 641–661 (TIQLIFSWFGMANFFIAFFIL), 674–694 (VPNLVLSYIYVAFIIFCFLLS), 709–729 (AMVVFALLTVYMTGAAIYLAV), 755–775 (IVISLAATFGIWLIASIMFLE), 783–803 (IVQYLLMAPTFVNVISIYAFA), 885–905 (VLCWSLSNAALVVGILNISSI), and 909–929 (TIYMGFLLYSVAGLALFRMMG).

The protein belongs to the chitin synthase family. Class I subfamily.

Its subcellular location is the cell membrane. It is found in the cytoplasmic vesicle membrane. It catalyses the reaction [(1-&gt;4)-N-acetyl-beta-D-glucosaminyl](n) + UDP-N-acetyl-alpha-D-glucosamine = [(1-&gt;4)-N-acetyl-beta-D-glucosaminyl](n+1) + UDP + H(+). Polymerizes chitin, a structural polymer of the cell wall and septum, by transferring the sugar moiety of UDP-GlcNAc to the non-reducing end of the growing chitin polymer. The polypeptide is Chitin synthase 4 (Mycosarcoma maydis (Corn smut fungus)).